Here is a 405-residue protein sequence, read N- to C-terminus: Cysteine desulfurase IscS (405 aa).

Residues 75-76, Asn-155, Gln-183, and 203-205 contribute to the pyridoxal 5'-phosphate site; these read AT and SGH. Lys-206 is subject to N6-(pyridoxal phosphate)lysine. Residue Thr-243 coordinates pyridoxal 5'-phosphate. Catalysis depends on Cys-329, which acts as the Cysteine persulfide intermediate. Cys-329 contacts [2Fe-2S] cluster.

The protein belongs to the class-V pyridoxal-phosphate-dependent aminotransferase family. NifS/IscS subfamily. Homodimer. Forms a heterotetramer with IscU, interacts with other sulfur acceptors. Pyridoxal 5'-phosphate serves as cofactor.

Its subcellular location is the cytoplasm. The enzyme catalyses (sulfur carrier)-H + L-cysteine = (sulfur carrier)-SH + L-alanine. It functions in the pathway cofactor biosynthesis; iron-sulfur cluster biosynthesis. Functionally, master enzyme that delivers sulfur to a number of partners involved in Fe-S cluster assembly, tRNA modification or cofactor biosynthesis. Catalyzes the removal of elemental sulfur atoms from cysteine to produce alanine. Functions as a sulfur delivery protein for Fe-S cluster synthesis onto IscU, an Fe-S scaffold assembly protein, as well as other S acceptor proteins. The sequence is that of Cysteine desulfurase IscS from Pseudoalteromonas translucida (strain TAC 125).